Here is a 470-residue protein sequence, read N- to C-terminus: Monocarboxylate transporter 4 (470 aa).

Residues 1-17 (MGGAVVDEGPTGIKAPD) are Cytoplasmic-facing. The chain crosses the membrane as a helical span at residues 18–38 (GGWGWAVLFGCFIITGFSYAF). Topologically, residues 39-61 (PKAVSVFFKELMHEFGIGYSDTA) are extracellular. A helical transmembrane segment spans residues 62–82 (WISSILLAMLYGTGPLCSVCV). Over 83–84 (NR) the chain is Cytoplasmic. Residues 85 to 105 (FGCRPVMLVGGLFASLGMVAA) form a helical membrane-spanning segment. Residues 106 to 109 (SFCR) are Extracellular-facing. The chain crosses the membrane as a helical span at residues 110–130 (SIIQIYLTTGVITGLGLALNF). Over 131–149 (QPSLIMLNRYFNKRRPIAN) the chain is Cytoplasmic. Residues 150–170 (GLAAAGSPVFLCALSPLGQLL) form a helical membrane-spanning segment. Residues 171 to 179 (QDHYGWRGG) lie on the Extracellular side of the membrane. A helical transmembrane segment spans residues 180–200 (FLILGGLLLNCCVCAALMRPL). At 201–231 (VAPQVGGGTEPRGPQRPPQRLLDLSVFRDRG) the chain is on the cytoplasmic side. Residues 232-252 (FLIYAVAASIMVLGLFVPPVF) form a helical membrane-spanning segment. At 253–267 (VVSYAKDMGVPDTKA) the chain is on the extracellular side. Residues 268–288 (AFLLTILGFIDIFARPTAGFI) traverse the membrane as a helical segment. Residues 289–298 (TGLKKVRPYS) lie on the Cytoplasmic side of the membrane. A helical transmembrane segment spans residues 299 to 319 (VYLFSFAMFFNGFTDLTGSTA). The Extracellular segment spans residues 320–321 (TD). A helical membrane pass occupies residues 322–342 (YGGLVVFCIFFGISYGMVGAL). The Cytoplasmic portion of the chain corresponds to 343–355 (QFEVLMAIVGTQK). A helical transmembrane segment spans residues 356 to 376 (FSSAIGLVLLLEAVAVLIGPP). Topologically, residues 377-391 (SGGKLLDATKVYKYV) are extracellular. The helical transmembrane segment at 392-412 (FILAGAEVLTSSLVLLLGNFF) threads the bilayer. At 413 to 470 (CIGKRKRPEVTEPEEVASEEKLHKPPVDVGVDSREVEHFLKAEPEKNGEVVHTPETSV) the chain is on the cytoplasmic side. 2 basolateral sorting signal regions span residues 429 to 446 (ASEEKLHKPPVDVGVDSR) and 446 to 470 (REVEHFLKAEPEKNGEVVHTPETSV). A Phosphoserine modification is found at serine 430. Threonine 465 is subject to Phosphothreonine. Residue serine 469 is modified to Phosphoserine.

It belongs to the major facilitator superfamily. Monocarboxylate porter (TC 2.A.1.13) family. In terms of assembly, interacts with BSG; interaction mediates SLC16A3 targeting to the plasma membrane.

It localises to the cell membrane. The protein localises to the basolateral cell membrane. It catalyses the reaction (S)-lactate(in) + H(+)(in) = (S)-lactate(out) + H(+)(out). It carries out the reaction pyruvate(out) + H(+)(out) = pyruvate(in) + H(+)(in). Proton-dependent transporter of monocarboxylates such as L-lactate and pyruvate. Plays a predominant role in the L-lactate efflux from highly glycolytic cells. The protein is Monocarboxylate transporter 4 (Slc16a3) of Mus musculus (Mouse).